The primary structure comprises 259 residues: Indole-3-glycerol phosphate synthase (259 aa).

This sequence belongs to the TrpC family.

It catalyses the reaction 1-(2-carboxyphenylamino)-1-deoxy-D-ribulose 5-phosphate + H(+) = (1S,2R)-1-C-(indol-3-yl)glycerol 3-phosphate + CO2 + H2O. It functions in the pathway amino-acid biosynthesis; L-tryptophan biosynthesis; L-tryptophan from chorismate: step 4/5. This is Indole-3-glycerol phosphate synthase from Dehalococcoides mccartyi (strain CBDB1).